The chain runs to 98 residues: MHGRLVTLKDIVLDLQPPDPVGLHCYEQLEDSSEDEVDKVDKQDAQPLTQHYQILTCCCGCDSNVRLVVECTDGDIRQLQDLLLGTLNIVCPICAPKP.

Residues 1-42 (MHGRLVTLKDIVLDLQPPDPVGLHCYEQLEDSSEDEVDKVDK) are E7 terminal domain. An LXCXE motif; interaction with host RB1 and TMEM173/STING motif is present at residues 23-27 (LHCYE). A zinc finger spans residues 58–94 (CCGCDSNVRLVVECTDGDIRQLQDLLLGTLNIVCPIC). The Nuclear export signal motif lies at 76–84 (IRQLQDLLL).

Belongs to the papillomaviridae E7 protein family. As to quaternary structure, homodimer. Homooligomer. Interacts with host RB1; this interaction induces dissociation of RB1-E2F1 complex thereby disrupting RB1 activity. Interacts with host EP300; this interaction represses EP300 transcriptional activity. Interacts with protein E2; this interaction inhibits E7 oncogenic activity. Interacts with host TMEM173/STING; this interaction impairs the ability of TMEM173/STING to sense cytosolic DNA and promote the production of type I interferon (IFN-alpha and IFN-beta). Interacts with host ZUBR1. In terms of processing, highly phosphorylated.

Its subcellular location is the host cytoplasm. It localises to the host nucleus. Functionally, plays a role in viral genome replication by driving entry of quiescent cells into the cell cycle. Stimulation of progression from G1 to S phase allows the virus to efficiently use the cellular DNA replicating machinery to achieve viral genome replication. E7 protein has both transforming and trans-activating activities. Induces the disassembly of the E2F1 transcription factor from RB1, with subsequent transcriptional activation of E2F1-regulated S-phase genes. Interferes with host histone deacetylation mediated by HDAC1 and HDAC2, leading to transcription activation. Also plays a role in the inhibition of both antiviral and antiproliferative functions of host interferon alpha. Interaction with host TMEM173/STING impairs the ability of TMEM173/STING to sense cytosolic DNA and promote the production of type I interferon (IFN-alpha and IFN-beta). This chain is Protein E7, found in Homo sapiens (Human).